The sequence spans 195 residues: 2-hydroxychromene-2-carboxylate isomerase (195 aa).

The Nucleophile role is filled by S13. Residue S13 coordinates glutathione. Substrate contacts are provided by residues K45 and 55–56; that span reads NR. 181–184 contributes to the glutathione binding site; the sequence is WGND.

The protein belongs to the GST superfamily. NadH family. Glutathione serves as cofactor.

It carries out the reaction 2-hydroxychromene-2-carboxylate = (3E)-4-(2-hydroxyphenyl)-2-oxobut-3-enoate. Activated by salicylate. Its function is as follows. Involved in the naphthalene and naphthalenesulfonate catabolic pathway. Catalyzes the reversible glutathione-dependent isomerization of 2-hydroxychromene-2-carboxylate (HCCA) to trans-O-hydroxybenzylidenepyruvate (THBPA). It can also use 2-hydroxybenzo[g]chromene-2-carboxylate as substrate. In Sphingobium xenophagum, this protein is 2-hydroxychromene-2-carboxylate isomerase (nsaD).